The following is a 187-amino-acid chain: Hypoxanthine/guanine phosphoribosyltransferase (187 aa).

The protein belongs to the purine/pyrimidine phosphoribosyltransferase family. Archaeal HPRT subfamily. In terms of assembly, homodimer.

It localises to the cytoplasm. The catalysed reaction is IMP + diphosphate = hypoxanthine + 5-phospho-alpha-D-ribose 1-diphosphate. It catalyses the reaction GMP + diphosphate = guanine + 5-phospho-alpha-D-ribose 1-diphosphate. It participates in purine metabolism; IMP biosynthesis via salvage pathway; IMP from hypoxanthine: step 1/1. Catalyzes a salvage reaction resulting in the formation of IMP that is energically less costly than de novo synthesis. The sequence is that of Hypoxanthine/guanine phosphoribosyltransferase from Methanocorpusculum labreanum (strain ATCC 43576 / DSM 4855 / Z).